The chain runs to 228 residues: Urease accessory protein UreF (228 aa).

It belongs to the UreF family. As to quaternary structure, ureD, UreF and UreG form a complex that acts as a GTP-hydrolysis-dependent molecular chaperone, activating the urease apoprotein by helping to assemble the nickel containing metallocenter of UreC. The UreE protein probably delivers the nickel.

It is found in the cytoplasm. In terms of biological role, required for maturation of urease via the functional incorporation of the urease nickel metallocenter. The protein is Urease accessory protein UreF of Photorhabdus laumondii subsp. laumondii (strain DSM 15139 / CIP 105565 / TT01) (Photorhabdus luminescens subsp. laumondii).